The following is a 396-amino-acid chain: MPPKKGGDGIKPPPIIGRFGTSLKIGIVGLPNVGKSTFFNVLTNSQASAENFPFCTIDPNESRVPVPDERFDSLCQYHKPASKIPAFLNVVDIAGLVKGAHNGQGLGNAFLSHISACDGIFHLTRAFEDDDITHVEGSVDPIRDIEIIHEELQLKDEEMIGPIIDKLEKVAVRGGDKKLKPEYDIMCKVKSWVIDQKKPVRFYHDWNDKEIEVLNKHLFLTSKPMVYLVNLSEKDYIRKKNKWLIKIKEWVDKYDPGALVIPFSGALELKLQELSAEERQKYLEANMTQSALPKIIKAGFAALQLEYFFTAGPEEVRAWTIRKGTKAPQAAGKIHTDFEKGFIMAEVMKYEDFKEEGSENAVKAAGKYRQQGRNYIVEDGDIIFFKFNTPQQPKKK.

In terms of domain architecture, OBG-type G spans 23–283 (LKIGIVGLPN…LSAEERQKYL (261 aa)). 32 to 37 (NVGKST) lines the ATP pocket. Positions 36 and 56 each coordinate Mg(2+). Leu-231 contacts ATP. Residues 267-274 (LELKLQEL) carry the Nuclear export signal motif. The residue at position 294 (Lys-294) is an N6-acetyllysine. One can recognise a TGS domain in the interval 304-387 (QLEYFFTAGP…EDGDIIFFKF (84 aa)).

It belongs to the TRAFAC class OBG-HflX-like GTPase superfamily. OBG GTPase family. YchF/OLA1 subfamily. Monomer. Requires Mg(2+) as cofactor.

It localises to the cytoplasm. It is found in the nucleus. The protein resides in the nucleolus. In terms of biological role, hydrolyzes ATP, and can also hydrolyze GTP with lower efficiency. Has lower affinity for GTP. The polypeptide is Obg-like ATPase 1 (Pongo abelii (Sumatran orangutan)).